The sequence spans 618 residues: MNQGHDMYYQQHMSAGPTQQPPTVTSYNPQPPIMQPSHGSYPAPPQPYGGYPYTNGMPSPQGPPVPGQMGPGSVLPSIAGHHGQAPGPVANQYSGFDTSGQIAPPGMKPRVTATLWEDEGSLCFQVEARGVCVARREDNHMINGTKLLNVAGMTRGRRDGILKSEKMRHVVKIGPMHLKGVWIPFERALDFANKEKITELLYPLFVHNISALLYHPANQNRNNQLMAAAERRKAETGGMRNPQGPPGLPALHHHSMSQNGSQSLSGNIGRPSLDRAHTFPTPPTSASSAVNMGSSDSFTWPPHQAMSNGQQNPMSIDTSLSNTRSMPTTPATTPPGSTLQSMQAYPPASQSYDGSRQLYNAPQLQQSPYQPTSTSPQDRSLYNQATYVKSEMGPPSARPMGSVLPGDHQNDQKPVNGLMHPPQGADQGHNNGVEDEADHEHDPEYTHDSRTYDNSQSQYNYTAPPVSSISSEQAHVSTDMPPGGQHGNSGRSTPRSAAAPQAYYQQAYSTSPRSATHQSTSNLYNVMSNDRGSTTNGSANGDVYSQSTDLSNGYATPVTNGNANLKRGRDDDDDRSSSSGQMDLKRRKTLMDNPISSPVYETMNRPAAAIAHPVSRRR.

Positions 13–28 (MSAGPTQQPPTVTSYN) are enriched in polar residues. Positions 13 to 105 (MSAGPTQQPP…FDTSGQIAPP (93 aa)) are disordered. Low complexity predominate over residues 48–59 (YGGYPYTNGMPS). Over residues 91 to 101 (NQYSGFDTSGQ) the composition is skewed to polar residues. The HTH APSES-type domain maps to 110 to 216 (RVTATLWEDE…HNISALLYHP (107 aa)). Residues 144-165 (GTKLLNVAGMTRGRRDGILKSE) constitute a DNA-binding region (H-T-H motif). 2 disordered regions span residues 229–355 (AERR…YDGS) and 390–618 (SEMG…SRRR). Polar residues-rich tracts occupy residues 256-266 (MSQNGSQSLSG), 284-298 (TSAS…SDSF), 305-326 (AMSN…TRSM), and 336-355 (GSTL…YDGS). Over residues 438-451 (DHEHDPEYTHDSRT) the composition is skewed to basic and acidic residues. Polar residues predominate over residues 452–476 (YDNSQSQYNYTAPPVSSISSEQAHV). A compositionally biased stretch (low complexity) spans 494–512 (PRSAAAPQAYYQQAYSTSP). Residues 513 to 563 (RSATHQSTSNLYNVMSNDRGSTTNGSANGDVYSQSTDLSNGYATPVTNGNA) show a composition bias toward polar residues. Residues 566–588 (KRGRDDDDDRSSSSGQMDLKRRK) are nuclear localization domain.

Belongs to the EFG1/PHD1/stuA family.

The protein resides in the nucleus. Transcription factor that regulates asexual reproduction. Binds the StuA-response elements (StRE) with the consensus sequence 5'-(A/T)CGCG(T/A)N(A/C)-3' at the promoters of target genes. Required for appressorium-mediated infection of rice leaves due to its involvement in the mobilization of lipids and glycogen. This is Cell pattern formation-associated protein STU1 from Pyricularia oryzae (strain 70-15 / ATCC MYA-4617 / FGSC 8958) (Rice blast fungus).